Reading from the N-terminus, the 132-residue chain is Pro-MCH 1 (132 aa).

The N-terminal stretch at 1–24 (MRHSVLSISFAVALFLECYTPSTA) is a signal peptide. A disulfide bridge connects residues Cys120 and Cys129.

Belongs to the melanin-concentrating hormone family. As to expression, pituitary gland. Produced in neurons of lateral basal hypothalamus which project both to the brain and to the neural lobe of the pituitary gland from where MCH is released.

In terms of biological role, plays a role in skin pigmentation by antagonizing the action of melanotropin alpha. Induces melanin concentration within the melanophores. May participate in the control of the hypothalamo-pituitary adrenal gland axis by inhibiting the release of ACTH. The polypeptide is Pro-MCH 1 (mch1) (Oncorhynchus mykiss (Rainbow trout)).